The primary structure comprises 465 residues: MEKTMDKIVQVAKARGFVYPGSEIYGGLANTWDYGNLGVELKNNVKRAWWKKFIQENPYNVGVDCAILMNPQTWVASGHLGGFSDPLMDCKECHERFRADKIIEDFAQDNGIELETSVDGWTNEQMVDFIKEHNVPCPSCGKHNFTDIRQFNLMFKTFQGVTEDAKNTVYLRPETAQGIFVNFKNVQRTSRKKIPFGIGQVGKSFRNEITPGNFTFRTREFEQMELEFFCEPGTDLEWFKYWRGFCRDWLISLGIKEDEMRLRDHDPAELAFYSKGTTDIEFLFPFGWGELWGIADRTDYDLGRHQEVSGQDLTYFDDQKNEKYLPYVIEPSLGADRVVLAFLCAAYDEEDIGTPEKPDVRTVFHFHPALAPVKIGVLPLSKKLNESAEKVFAQLSKTYNCEYDDRGTIGKRYRRQDEIGTPFCVTYDFDSEEDHCVTVRDRDTMEQERIAIDELDAYFAKKFEF.

Substrate contacts are provided by arginine 98 and glutamate 174. ATP-binding positions include 206-208 (RNE), 216-221 (FRTREF), 290-291 (EL), and 334-337 (GADR). 221-225 (FEQME) contributes to the substrate binding site. 330-334 (EPSLG) provides a ligand contact to substrate.

This sequence belongs to the class-II aminoacyl-tRNA synthetase family. As to quaternary structure, homodimer.

The protein localises to the cytoplasm. The catalysed reaction is tRNA(Gly) + glycine + ATP = glycyl-tRNA(Gly) + AMP + diphosphate. Functionally, catalyzes the attachment of glycine to tRNA(Gly). This chain is Glycine--tRNA ligase, found in Agathobacter rectalis (strain ATCC 33656 / DSM 3377 / JCM 17463 / KCTC 5835 / VPI 0990) (Eubacterium rectale).